The sequence spans 342 residues: Putative anthocyanidin reductase (342 aa).

Residues Arg44, Lys51, 71–72 (EL), 91–93 (VAT), Tyr172, Lys176, 199–202 (PVLV), and Ser214 contribute to the NADP(+) site. Residue Lys176 is the Proton donor of the active site.

Belongs to the NAD(P)-dependent epimerase/dehydratase family. Dihydroflavonol-4-reductase subfamily. In terms of tissue distribution, highly expressed in leaves and weakly in stems. Not expressed in roots.

The protein operates within secondary metabolite biosynthesis; flavonoid biosynthesis. The sequence is that of Putative anthocyanidin reductase from Ginkgo biloba (Ginkgo).